The chain runs to 1879 residues: Protein TIC 214 (1879 aa).

6 helical membrane-spanning segments follow: residues 18–38, 67–87, 90–110, 127–147, 175–195, and 218–238; these read IINS…FSIG, FITG…HLAL, PHTI…WNNH, LSIQ…HFIL, VGWL…LVWI, and IFSI…PSPI. A disordered region spans residues 243–291; it reads LKETEERGESEEERDVEKTSETKGTKQEQEGSTEEDPSPSLFSEEKEDP. Positions 257–271 are enriched in basic and acidic residues; the sequence is DVEKTSETKGTKQEQ.

The protein belongs to the TIC214 family. As to quaternary structure, part of the Tic complex.

It is found in the plastid. The protein resides in the chloroplast inner membrane. Functionally, involved in protein precursor import into chloroplasts. May be part of an intermediate translocation complex acting as a protein-conducting channel at the inner envelope. The sequence is that of Protein TIC 214 from Morus indica (Mulberry).